A 498-amino-acid chain; its full sequence is Death-associated inhibitor of apoptosis 2 (498 aa).

3 BIR repeats span residues arginine 12–leucine 77, arginine 116–glutamine 180, and arginine 215–leucine 280. The Zn(2+) site is built by cysteine 249, cysteine 252, histidine 269, and cysteine 276. The segment at cysteine 451 to arginine 486 adopts an RING-type zinc-finger fold.

It belongs to the IAP family. As to quaternary structure, interacts with the caspase Strica. Interacts (via BIR2 domain) with rpr and grim. Interacts (via the BIR2 and BIR3 domains) with hid. Interacts (via BIR3 domain) with Drice. Interacts with Dredd; likely to bind Dredd simultaneously with Fadd to form a trimeric complex. In terms of processing, caspase-dependent cleavage is required for suppression of Drice-mediated cell death. In terms of tissue distribution, expressed in both principal and stellar cells of the Malphigian tubules.

The protein resides in the nucleus. It is found in the cytoplasm. Functionally, required for activation of NF-kappaB transcription factors in the immune deficiency (Imd) signaling cascade which is essential for innate immune responses upon infection by Gram-negative bacteria. Promotes cytoplasmic cleavage of Rel and its translocation to the nucleus where it drives expression of antimicrobial peptides. Binds, polyubiquitinates and activates Dredd which is required for Rel-mediated induction of antimicrobial peptides. Anti-apoptotic protein which binds, ubiquitinates and inactivates the effector caspase Drice. Suppresses rpr and hid-dependent cell death in the eye. However, has also been shown to have little, if any, role in the regulation of the canonical caspase-dependent apoptosis pathway. Plays a role in regulating the expression of ion channels. This is Death-associated inhibitor of apoptosis 2 (Diap2) from Drosophila melanogaster (Fruit fly).